A 258-amino-acid polypeptide reads, in one-letter code: Small ribosomal subunit protein mS23 (258 aa).

The segment covering 230–239 (KKNSTKQSWA) has biased composition (polar residues). Residues 230–258 (KKNSTKQSWAEATEEKEEQDSAEPEELKL) are disordered. Over residues 241–258 (ATEEKEEQDSAEPEELKL) the composition is skewed to acidic residues.

Belongs to the mitochondrion-specific ribosomal protein mS23 family. Component of the mitochondrial small ribosomal subunit.

Its subcellular location is the mitochondrion. This is Small ribosomal subunit protein mS23 (RSM25) from Eremothecium gossypii (strain ATCC 10895 / CBS 109.51 / FGSC 9923 / NRRL Y-1056) (Yeast).